The following is a 146-amino-acid chain: Prolactin-inducible protein homolog (146 aa).

The signal sequence occupies residues 1 to 28 (MRLLQLLFRASPATLLLVLCLQLGANKA). A Pyrrolidone carboxylic acid modification is found at glutamine 29. Cystine bridges form between cysteine 65/cysteine 91 and cysteine 89/cysteine 123. A glycan (N-linked (GlcNAc...) asparagine) is linked at asparagine 105.

This sequence belongs to the PIP family. As to quaternary structure, monomer. Interacts with AZGP1.

It is found in the secreted. The protein is Prolactin-inducible protein homolog (PIP) of Gorilla gorilla gorilla (Western lowland gorilla).